Consider the following 234-residue polypeptide: Ribulose-phosphate 3-epimerase (234 aa).

Substrate is bound at residue Ser-7. Residues His-32, Asp-34, and His-65 each contribute to the a divalent metal cation site. Asp-34 acts as the Proton acceptor in catalysis. Substrate is bound by residues His-65, 139–142, 172–174, and 194–195; these read GFSG, DGG, and AS. Asp-172 is a binding site for a divalent metal cation. Residue Asp-172 is the Proton donor of the active site.

It belongs to the ribulose-phosphate 3-epimerase family. The cofactor is a divalent metal cation.

The catalysed reaction is D-ribulose 5-phosphate = D-xylulose 5-phosphate. The protein operates within carbohydrate degradation. In terms of biological role, catalyzes the reversible epimerization of D-ribulose 5-phosphate to D-xylulose 5-phosphate. This Methanocaldococcus jannaschii (strain ATCC 43067 / DSM 2661 / JAL-1 / JCM 10045 / NBRC 100440) (Methanococcus jannaschii) protein is Ribulose-phosphate 3-epimerase.